The chain runs to 259 residues: Phosphate import ATP-binding protein PstB (259 aa).

An ABC transporter domain is found at 11-254 (AEARNLNFYY…PQDKRTEDYI (244 aa)). 43–50 (GPSGCGKS) contacts ATP.

Belongs to the ABC transporter superfamily. Phosphate importer (TC 3.A.1.7) family. As to quaternary structure, the complex is composed of two ATP-binding proteins (PstB), two transmembrane proteins (PstC and PstA) and a solute-binding protein (PstS).

The protein resides in the cell inner membrane. The enzyme catalyses phosphate(out) + ATP + H2O = ADP + 2 phosphate(in) + H(+). Part of the ABC transporter complex PstSACB involved in phosphate import. Responsible for energy coupling to the transport system. The polypeptide is Phosphate import ATP-binding protein PstB (Dechloromonas aromatica (strain RCB)).